Here is a 1943-residue protein sequence, read N- to C-terminus: Sickle tail protein homolog (1943 aa).

2 disordered regions span residues 1–79 (MEEN…KEIL) and 112–177 (QERL…RSTN). The segment covering 38 to 47 (AECRRTKERL) has biased composition (basic and acidic residues). Residues 48 to 62 (SNGNSRGSVSKSSRN) show a composition bias toward polar residues. The residue at position 169 (serine 169) is a Phosphoserine. Residue tyrosine 244 is modified to Phosphotyrosine. The segment at 290–331 (ARGDGPGAPRPGSTAHPPHAIPNSPPSTPVPHSMPPSPSRIP) is disordered. The span at 308-328 (HAIPNSPPSTPVPHSMPPSPS) shows a compositional bias: pro residues. O-linked (GlcNAc) serine glycosylation is present at serine 357. Serine 361 and serine 365 each carry phosphoserine. Tyrosine 393 is subject to Phosphotyrosine. The interval 456 to 476 (RKYPDSHLPTLGSKTPPASPH) is disordered. Threonine 470 is subject to Phosphothreonine. Phosphoserine is present on residues serine 474 and serine 526. Coiled coils occupy residues 557–581 (RETRERMQAMEKQIASLTGLVQSAL) and 644–685 (MSLL…ELEI). Position 809 is a phosphoserine (serine 809). A disordered region spans residues 848 to 874 (VLKSQEEAAHTSGQPFHSTGAPGDAKS). Residues 957-985 (SAKNRAVSIEKAEKKWEEKRQNLDHYNGK) are a coiled coil. Disordered stretches follow at residues 1003–1230 (PNLE…SDAS), 1305–1329 (KTKEMEKQNTDKCHVSSHTRLTESS), and 1352–1377 (PKEARHANVNPNEDGESSSSSPTEEN). Phosphoserine occurs at positions 1027, 1030, 1033, and 1044. Residues 1044–1053 (SPPPPPPPPR) are compositionally biased toward pro residues. Composition is skewed to basic and acidic residues over residues 1155–1167 (EPSRADSHVKDTR), 1174–1192 (PKEKKNLEFFHEDVRKSDV), and 1305–1318 (KTKEMEKQNTDKCH). Polar residues predominate over residues 1368-1377 (SSSSSPTEEN). Residue serine 1461 is modified to Phosphoserine. Positions 1464–1490 (FEECDEELERMMMEEKIEEEEEEENGD) form a coiled coil. 3 disordered regions span residues 1481–1572 (EEEE…PKKK), 1606–1660 (EEEE…EIRK), and 1677–1943 (ENTI…KETS). Polar residues-rich tracts occupy residues 1491 to 1501 (SVVQNNNTSQM) and 1512 to 1533 (RTGQQVETKSQPHSLATETRNP). 2 stretches are compositionally biased toward basic and acidic residues: residues 1539–1548 (NRTELNKFSH) and 1612–1625 (GTLKQHKEAKRFEI). Residues 1643-1653 (QPSIESTSPIS) show a composition bias toward polar residues. Positions 1656 to 1686 (DEIRKNTYRTLDSLEQTIKQLENTISEMSPK) form a coiled coil. Polar residues-rich tracts occupy residues 1691-1706 (TSCSSNRDSVASSSHI) and 1731-1747 (IPSASRKGSSGAPQTSR). Serine 1739 carries the post-translational modification Phosphoserine. Over residues 1763–1775 (KPGKQSKLQDPRQ) the composition is skewed to basic and acidic residues. Low complexity predominate over residues 1806 to 1825 (SPSSGKSSSLPSSSGDSSNL). 2 stretches are compositionally biased toward polar residues: residues 1834 to 1843 (SIASNPLSPQ) and 1853 to 1869 (LIPSVSNGSLKFQSLTH). Serine 1841 is modified (phosphoserine). Low complexity predominate over residues 1892 to 1905 (SFSSSPPSPASSVS). 3 positions are modified to phosphoserine: serine 1896, serine 1899, and serine 1902. Polar residues predominate over residues 1906–1943 (LNQGAKGTRTIHTPSLTSYKAQNGSSSKATPSTAKETS).

As to quaternary structure, interacts with CPNE4 (via VWFA domain).

Its subcellular location is the cytoplasm. It localises to the cytoskeleton. It is found in the microtubule organizing center. The protein resides in the centrosome. Functionally, required for normal development of intervertebral disks. In Homo sapiens (Human), this protein is Sickle tail protein homolog (KIAA1217).